The primary structure comprises 360 residues: D-alanine--D-alanine ligase (360 aa).

An ATP-grasp domain is found at 134–343; the sequence is KILAQRVGVP…YTELITRLIQ (210 aa). Position 169 to 224 (169 to 224) interacts with ATP; sequence AEKLGHDMFVKPSNQGSSVGVNHVTNAEEYAAALEEAFKYDDKVLVEETVPGTEVE. Residues Asp-297, Glu-310, and Asn-312 each coordinate Mg(2+).

The protein belongs to the D-alanine--D-alanine ligase family. It depends on Mg(2+) as a cofactor. Mn(2+) is required as a cofactor.

The protein localises to the cytoplasm. It catalyses the reaction 2 D-alanine + ATP = D-alanyl-D-alanine + ADP + phosphate + H(+). The protein operates within cell wall biogenesis; peptidoglycan biosynthesis. Functionally, cell wall formation. In Lactobacillus acidophilus (strain ATCC 700396 / NCK56 / N2 / NCFM), this protein is D-alanine--D-alanine ligase.